Consider the following 282-residue polypeptide: Bis(5'-nucleosyl)-tetraphosphatase, symmetrical (282 aa).

The protein belongs to the Ap4A hydrolase family.

It carries out the reaction P(1),P(4)-bis(5'-adenosyl) tetraphosphate + H2O = 2 ADP + 2 H(+). In terms of biological role, hydrolyzes diadenosine 5',5'''-P1,P4-tetraphosphate to yield ADP. The chain is Bis(5'-nucleosyl)-tetraphosphatase, symmetrical from Sodalis glossinidius (strain morsitans).